The sequence spans 152 residues: Superoxide dismutase [Cu-Zn] (152 aa).

Cysteine 7 carries the S-palmitoyl cysteine lipid modification. Histidine 47, histidine 49, and histidine 64 together coordinate Cu cation. An intrachain disulfide couples cysteine 58 to cysteine 146. The Zn(2+) site is built by histidine 64, histidine 72, histidine 81, and aspartate 84. Histidine 120 contacts Cu cation.

The protein belongs to the Cu-Zn superoxide dismutase family. In terms of assembly, homodimer. It depends on Cu cation as a cofactor. Zn(2+) serves as cofactor.

The protein localises to the cytoplasm. The protein resides in the nucleus. The catalysed reaction is 2 superoxide + 2 H(+) = H2O2 + O2. Destroys radicals which are normally produced within the cells and which are toxic to biological systems. The polypeptide is Superoxide dismutase [Cu-Zn] (sod1) (Xiphias gladius (Swordfish)).